Reading from the N-terminus, the 864-residue chain is MHERYVPADVEAAAQSDWRAADAYRSKEDANRKKFYCVSMLPYPSGKLHMGHVRNYTINDVMYRYLRMNGYNTLMPMGWDAFGMPAENAAMANGVPPAQWTYENIAYMKKQMQSMGLAIDWSREVTTCKPDYYKWNQWLFLKMLEKGVAYKKTGTVNWDPVDQTVLANEQVIDGRGWRSGALVEKREIPMYYMRITQYADELLNDLDGLGWPERVKVMQHNWIGKSFGVNFGFPYELDGEKKLLRVFTTRADTIMGVTFCAIAAEHPLAARLARDKPALQAFIDECKRGGVAEADIATMEKKGVATGFSVSHPLTGEPVEVWIGNYVLMSYGEGAVMGVPAHDERDFAFAKKYGLPIRQVIAVEGETYSTDAWQEWYGDKTRAVCVNSGKYDGLAHDAAVDAIAAELKAGGLGDKQITYRLRDWGISRQRYWGTPIPIIHCPSCGDVPVPEQDLPVVLPEDLVPDGTGNPLAKSDAFLNCTCPKCGAAAKRETDTMDTFVDSAWYFSRYAAPDAQTMVDARTDYWMPMDQYIGGIEHAILHLLYSRFWAKVMRDLGLVAFGEPAKNLLTQGMVLNETFYREDAAGKKTWYNPADVTVSFDDKGRPVGAVLKSDGQPVELGGIEKMSKSKNNGVDPQMLIDHYGADTARLFTMFAAPPEQQLEWSGAGVDGASRFLRRVWAFGFANREALAVRAPFDAAQLAEADKTLRREIHGVLKQADFDYQRLQYNTVVSAAMKMLNAIEGAKGATPAVLRETYGVLLRVLYPVVPHVTFELWKALGYADEFGPLLDAPWPKVDEAALEQAEIELVLQVNGKVRGALKVAKDASREAIEAAAVADEMFAKFAEGRPAKKIIVVPGRLVNVVV.

Positions 42–52 match the 'HIGH' region motif; sequence PYPSGKLHMGH. The 'KMSKS' region motif lies at 624-628; that stretch reads KMSKS. Lysine 627 is an ATP binding site.

It belongs to the class-I aminoacyl-tRNA synthetase family.

The protein localises to the cytoplasm. The catalysed reaction is tRNA(Leu) + L-leucine + ATP = L-leucyl-tRNA(Leu) + AMP + diphosphate. The chain is Leucine--tRNA ligase from Burkholderia pseudomallei (strain 668).